The sequence spans 811 residues: tRNA(Met) cytidine acetyltransferase TmcA (811 aa).

2 residues coordinate ATP: Gln267 and Arg439. Residues 473-662 (KKEVYLEEPD…GEFTAIVLKP (190 aa)) form the N-acetyltransferase domain. Residues 589 to 591 (IAT), Glu629, and Arg636 contribute to the acetyl-CoA site.

This sequence belongs to the TmcA family.

It is found in the cytoplasm. It catalyses the reaction cytidine(34) in elongator tRNA(Met) + acetyl-CoA + ATP + H2O = N(4)-acetylcytidine(34) in elongator tRNA(Met) + ADP + phosphate + CoA + H(+). It carries out the reaction a cytidine in RNA + acetyl-CoA + ATP + H2O = an N(4)-acetylcytidine in RNA + ADP + phosphate + CoA + H(+). The enzyme catalyses a cytidine in tRNA + acetyl-CoA + ATP + H2O = an N(4)-acetylcytidine in tRNA + ADP + phosphate + CoA + H(+). The catalysed reaction is a cytidine in mRNA + acetyl-CoA + ATP + H2O = an N(4)-acetylcytidine in mRNA + ADP + phosphate + CoA + H(+). Its function is as follows. Catalyzes the formation of N(4)-acetylcytidine (ac(4)C) at the wobble position of tRNA(Met), by using acetyl-CoA as an acetyl donor and ATP (or GTP). Functionally, catalyzes the formation of 267 N(4)-acetylcytidine (ac(4)C) sites in RNA, almost always on the middle C of a CCG motif. Modifications are found in rRNA, ncRNA, mRNA and tRNA. More acetylation is observed at 95 than at 75 or 85 degrees Celsius. The sequence is that of tRNA(Met) cytidine acetyltransferase TmcA from Thermococcus sp. (strain AM4).